Reading from the N-terminus, the 166-residue chain is Phosphopantetheine adenylyltransferase (166 aa).

Substrate is bound at residue S11. ATP-binding positions include 11-12 and H19; that span reads SF. Substrate-binding residues include K43, V80, and R94. Residues 95 to 97, E105, and 130 to 136 contribute to the ATP site; these read GLR and VRTVTAT.

It belongs to the bacterial CoaD family. Homohexamer. Mg(2+) serves as cofactor.

It is found in the cytoplasm. The catalysed reaction is (R)-4'-phosphopantetheine + ATP + H(+) = 3'-dephospho-CoA + diphosphate. It functions in the pathway cofactor biosynthesis; coenzyme A biosynthesis; CoA from (R)-pantothenate: step 4/5. Functionally, reversibly transfers an adenylyl group from ATP to 4'-phosphopantetheine, yielding dephospho-CoA (dPCoA) and pyrophosphate. This is Phosphopantetheine adenylyltransferase from Chelativorans sp. (strain BNC1).